Reading from the N-terminus, the 278-residue chain is MLVHPQFDPVAISIGPLAVRWYGLMYLLGFSLFILLGRYRIRQQPNGVFTREMLDDALFYGVLGVILGGRLGHVLFYEPGYYLQHPLEILAIWQGGMSFHGGFLGVAIAMLCLARKYQLSWLAVTDFIAPLVPLGLGAGRIGNFINGELWGRPTDVPWGMIFPYADNLPRHPSQLYEFALEGLVLFALIWLYSAKPRPLGAVTGMFMIGYGAFRSFCEFFREPDDGFLGIMTLGISMGQWLSLPMIAAGIALLYWAYRYDGKPEKAARKLPRERKNRD.

4 helical membrane-spanning segments follow: residues 17 to 37 (LAVR…ILLG), 57 to 77 (ALFY…VLFY), 89 to 109 (ILAI…VAIA), and 119 to 139 (LSWL…LGAG). R140 provides a ligand contact to a 1,2-diacyl-sn-glycero-3-phospho-(1'-sn-glycerol). 3 consecutive transmembrane segments (helical) span residues 174–194 (QLYE…LYSA), 200–220 (GAVT…CEFF), and 233–253 (LGIS…IALL).

Belongs to the Lgt family.

The protein localises to the cell inner membrane. The enzyme catalyses L-cysteinyl-[prolipoprotein] + a 1,2-diacyl-sn-glycero-3-phospho-(1'-sn-glycerol) = an S-1,2-diacyl-sn-glyceryl-L-cysteinyl-[prolipoprotein] + sn-glycerol 1-phosphate + H(+). The protein operates within protein modification; lipoprotein biosynthesis (diacylglyceryl transfer). In terms of biological role, catalyzes the transfer of the diacylglyceryl group from phosphatidylglycerol to the sulfhydryl group of the N-terminal cysteine of a prolipoprotein, the first step in the formation of mature lipoproteins. The chain is Phosphatidylglycerol--prolipoprotein diacylglyceryl transferase from Nitrosomonas europaea (strain ATCC 19718 / CIP 103999 / KCTC 2705 / NBRC 14298).